We begin with the raw amino-acid sequence, 717 residues long: Polyribonucleotide nucleotidyltransferase (717 aa).

2 residues coordinate Mg(2+): Asp487 and Asp493. A KH domain is found at 554-613 (PKIITMAINPDKIRDVIGPSGKQINKIIEETGVKIDIEQDGTVFISSINQEMNEKAKKII). The region spanning 623–691 (GEIYLGKVKR…KQGRVNLSRK (69 aa)) is the S1 motif domain.

The protein belongs to the polyribonucleotide nucleotidyltransferase family. Requires Mg(2+) as cofactor.

It localises to the cytoplasm. The catalysed reaction is RNA(n+1) + phosphate = RNA(n) + a ribonucleoside 5'-diphosphate. In terms of biological role, involved in mRNA degradation. Catalyzes the phosphorolysis of single-stranded polyribonucleotides processively in the 3'- to 5'-direction. This chain is Polyribonucleotide nucleotidyltransferase, found in Bacillus mycoides (strain KBAB4) (Bacillus weihenstephanensis).